A 241-amino-acid polypeptide reads, in one-letter code: Nopaline transport system permease protein NocM (241 aa).

The 199-residue stretch at 17–215 folds into the ABC transmembrane type-1 domain; it reads VPTTLTLAFI…FITFVVSRLV (199 aa). Helical transmembrane passes span 21 to 41, 52 to 72, 95 to 115, 161 to 181, and 191 to 211; these read LTLAFISLLIGFVVSVPVALM, LAYGYVYIIRSTPLLVQMFLI, PWFCAILALALNTAAYTSEII, VMLIIKSTSLASTITIVEVTG, and YSPVEVFIVAGAIYLFITFVV.

It belongs to the binding-protein-dependent transport system permease family. HisMQ subfamily.

The protein localises to the cell inner membrane. Component of the nopaline active transport system probably consisting of four subunits: Q, M, P and T. This system is also capable of transporting octopine provided that catabolic functions are induced with nopaline. This Agrobacterium fabrum (strain C58 / ATCC 33970) (Agrobacterium tumefaciens (strain C58)) protein is Nopaline transport system permease protein NocM (nocM).